Consider the following 334-residue polypeptide: Malate dehydrogenase, cytoplasmic (334 aa).

Position 2 is an N-acetylserine (Ser2). NAD(+)-binding positions include 11–17 (GAAGQIA) and Asp42. Residues Arg92 and Arg98 each coordinate substrate. NAD(+) is bound at residue Asn105. Lys110 is modified (N6-succinyllysine). Gln112 contacts NAD(+). Residues Lys118 and Lys121 each carry the N6-acetyllysine modification. Position 129-131 (129-131 (VGN)) interacts with NAD(+). Asn131 and Arg162 together coordinate substrate. Residue His187 is the Proton acceptor of the active site. Lys214 bears the N6-succinyllysine mark. Position 217 is a phosphoserine (Ser217). An Omega-N-methylarginine modification is found at Arg230. Phosphoserine is present on Ser241. Position 298 is an N6-acetyllysine; alternate (Lys298). Lys298 is modified (N6-succinyllysine; alternate). A Phosphoserine modification is found at Ser309. Position 318 is an N6-succinyllysine (Lys318). A phosphoserine mark is found at Ser332 and Ser333.

This sequence belongs to the LDH/MDH superfamily. MDH type 2 family. In terms of assembly, homodimer. ISGylated. Post-translationally, acetylation at Lys-118 dramatically enhances enzymatic activity and promotes adipogenic differentiation.

It localises to the cytoplasm. It is found in the cytosol. The catalysed reaction is (S)-malate + NAD(+) = oxaloacetate + NADH + H(+). The enzyme catalyses (2R)-2-hydroxy-3-(4-hydroxyphenyl)propanoate + NAD(+) = 3-(4-hydroxyphenyl)pyruvate + NADH + H(+). It carries out the reaction (S)-2-hydroxyglutarate + NAD(+) = 2-oxoglutarate + NADH + H(+). In terms of biological role, catalyzes the reduction of aromatic alpha-keto acids in the presence of NADH. Plays essential roles in the malate-aspartate shuttle and the tricarboxylic acid cycle, important in mitochondrial NADH supply for oxidative phosphorylation. Catalyzes the reduction of 2-oxoglutarate to 2-hydroxyglutarate, leading to elevated reactive oxygen species (ROS). The polypeptide is Malate dehydrogenase, cytoplasmic (Homo sapiens (Human)).